A 161-amino-acid polypeptide reads, in one-letter code: 3-isopropylmalate dehydratase small subunit (161 aa).

It belongs to the LeuD family. LeuD type 2 subfamily. In terms of assembly, heterodimer of LeuC and LeuD.

It catalyses the reaction (2R,3S)-3-isopropylmalate = (2S)-2-isopropylmalate. It functions in the pathway amino-acid biosynthesis; L-leucine biosynthesis; L-leucine from 3-methyl-2-oxobutanoate: step 2/4. Functionally, catalyzes the isomerization between 2-isopropylmalate and 3-isopropylmalate, via the formation of 2-isopropylmaleate. The polypeptide is 3-isopropylmalate dehydratase small subunit (Sulfolobus acidocaldarius (strain ATCC 33909 / DSM 639 / JCM 8929 / NBRC 15157 / NCIMB 11770)).